The chain runs to 395 residues: Putative 8-amino-7-oxononanoate synthase (395 aa).

Arg23 provides a ligand contact to substrate. 110–111 contributes to the pyridoxal 5'-phosphate binding site; that stretch reads GY. Residue His135 coordinates substrate. Pyridoxal 5'-phosphate contacts are provided by residues Ser182, 207–210, and 239–242; these read DEAH and TFSK. Lys242 carries the post-translational modification N6-(pyridoxal phosphate)lysine. Position 356 (Thr356) interacts with substrate.

This sequence belongs to the class-II pyridoxal-phosphate-dependent aminotransferase family. BioF subfamily. Homodimer. The cofactor is pyridoxal 5'-phosphate.

The catalysed reaction is 6-carboxyhexanoyl-[ACP] + L-alanine + H(+) = (8S)-8-amino-7-oxononanoate + holo-[ACP] + CO2. Its pathway is cofactor biosynthesis; biotin biosynthesis. Its function is as follows. Catalyzes the decarboxylative condensation of pimeloyl-[acyl-carrier protein] and L-alanine to produce 8-amino-7-oxononanoate (AON), [acyl-carrier protein], and carbon dioxide. The sequence is that of Putative 8-amino-7-oxononanoate synthase (bioF) from Bacillus mycoides (strain KBAB4) (Bacillus weihenstephanensis).